A 420-amino-acid chain; its full sequence is MNYIKVKGTYDVLPTEAENWVALESYVRKLFKTYNYGEIRTPMMEYSNVIHRETELSDMVIKETYNFKDKSDRDLTLRPEGTAGVIRSYVENKLYAQAGVTKLYYMGPNFRYERPQKGRFRQFMQFGCEVLGSNEPSIDAEVIELAYETIYRLGLKQVSVKLNSLGDDASKANYRQALIDFLTPVKDKLSKDSQDRLTHNPLRILDSKDTADIELIKNAPLPLDYLNETSKQHFDSVLELLNLMNIPYEIDRKLVRGLDYYAHTVFEIHATIKGFGAQNALGGGGRYQNLVKELGGPDTPGIGYAFGMERLLSALEQEGITLTSPKQLDVYFITFDQQSRKKAIQLQHILRSENILSDIDHLNRGFKPQLKEALRYDSKFIIIIGENELNNNVVQLKNTKTEEQVEVSMDTLLDTLKELL.

Belongs to the class-II aminoacyl-tRNA synthetase family. As to quaternary structure, homodimer.

It localises to the cytoplasm. It carries out the reaction tRNA(His) + L-histidine + ATP = L-histidyl-tRNA(His) + AMP + diphosphate + H(+). This Acholeplasma laidlawii (strain PG-8A) protein is Histidine--tRNA ligase.